A 280-amino-acid polypeptide reads, in one-letter code: Fructose-1,6-bisphosphatase class 1 (280 aa).

The Mg(2+) site is built by Glu-64, Asp-83, Leu-85, and Asp-86. Substrate contacts are provided by residues 86 to 89 (DGSS), Tyr-189, and Lys-220. Glu-226 contacts Mg(2+).

It belongs to the FBPase class 1 family. Homotetramer. It depends on Mg(2+) as a cofactor.

The protein resides in the cytoplasm. It catalyses the reaction beta-D-fructose 1,6-bisphosphate + H2O = beta-D-fructose 6-phosphate + phosphate. Its pathway is carbohydrate biosynthesis; gluconeogenesis. The polypeptide is Fructose-1,6-bisphosphatase class 1 (Campylobacter jejuni subsp. jejuni serotype O:23/36 (strain 81-176)).